The primary structure comprises 326 residues: Vomeronasal type-1 receptor 94 (326 aa).

The Extracellular segment spans residues 1 to 32 (MSEILLFSPQPLFSYTMNKYSRLYTNSNIRNT). A helical transmembrane segment spans residues 33-53 (FFSEIGIGIAANSLLLLFHIF). Residues 54-65 (KFIRGQRSRLTD) are Cytoplasmic-facing. The helical transmembrane segment at 66-86 (LPIGLLSLIHLLKLLMIAFIA) threads the bilayer. At 87-110 (TDIFISWRGWDDIICKFLVYLYRS) the chain is on the extracellular side. Cysteine 101 and cysteine 188 form a disulfide bridge. A helical membrane pass occupies residues 111–130 (FRGLSLCTTCMLSVLQAITL). At 131 to 150 (SPRSSCLAKFKHKSPHHVSC) the chain is on the cytoplasmic side. Residues 151–171 (AILSLSVLYMFISSHLLVSLI) traverse the membrane as a helical segment. The Extracellular portion of the chain corresponds to 172–203 (ATPNLTTNVFMYVSESCSILPMSYLMQSMFST). N-linked (GlcNAc...) asparagine glycosylation occurs at asparagine 175. A helical transmembrane segment spans residues 204–224 (LLAIRDVFLISLMVLSTCYMV). At 225-254 (ALLCRHRKQTRHLQGTSLSPKASPEKKATH) the chain is on the cytoplasmic side. The chain crosses the membrane as a helical span at residues 255–275 (SILMLMSFFVLMSILDSIVSC). At 276–285 (SRTMFLYDPT) the chain is on the extracellular side. Residues 286 to 306 (SYAIQIFVSHIYATVSPFVFM) traverse the membrane as a helical segment. Over 307–326 (SNEKHIVNFLRSLCKRVINV) the chain is Cytoplasmic.

It belongs to the G-protein coupled receptor 1 family.

The protein resides in the cell membrane. Putative pheromone receptor implicated in the regulation of social as well as reproductive behavior. This is Vomeronasal type-1 receptor 94 (Vom1r94) from Rattus norvegicus (Rat).